A 427-amino-acid chain; its full sequence is Trigger factor (427 aa).

The 86-residue stretch at 163-248 folds into the PPIase FKBP-type domain; that stretch reads GDTVVIDFVG…IHEVKAKEVP (86 aa).

The protein belongs to the FKBP-type PPIase family. Tig subfamily.

It is found in the cytoplasm. It carries out the reaction [protein]-peptidylproline (omega=180) = [protein]-peptidylproline (omega=0). Involved in protein export. Acts as a chaperone by maintaining the newly synthesized protein in an open conformation. Functions as a peptidyl-prolyl cis-trans isomerase. This chain is Trigger factor, found in Streptococcus pneumoniae (strain JJA).